A 421-amino-acid chain; its full sequence is Leucine-rich repeat-containing protein 42 (421 aa).

5 LRR repeats span residues 149–170, 174–195, 202–222, 234–255, and 259–280; these read VLCS…EEIK, ELTR…LEHL, SVTQ…RKMT, NLTL…GYLF, and KLNC…KDKL. The segment at 374 to 406 is disordered; sequence HEPLLSQESKKSKKRAFEESEQEQSSPQSAKQK. A Phosphoserine modification is found at Ser399.

The protein belongs to the LRRC42 family.

This is Leucine-rich repeat-containing protein 42 (Lrrc42) from Rattus norvegicus (Rat).